Consider the following 368-residue polypeptide: Alanine racemase 3 (368 aa).

Residue lysine 42 is the Proton acceptor; specific for D-alanine of the active site. The residue at position 42 (lysine 42) is an N6-(pyridoxal phosphate)lysine. Residue arginine 141 participates in substrate binding. Catalysis depends on tyrosine 262, which acts as the Proton acceptor; specific for L-alanine. Methionine 310 lines the substrate pocket.

Belongs to the alanine racemase family. Pyridoxal 5'-phosphate serves as cofactor.

The catalysed reaction is L-alanine = D-alanine. It participates in amino-acid biosynthesis; D-alanine biosynthesis; D-alanine from L-alanine: step 1/1. Its function is as follows. Catalyzes the interconversion of L-alanine and D-alanine. May also act on other amino acids. This chain is Alanine racemase 3 (alr3), found in Salmonella typhi.